The primary structure comprises 567 residues: TGF-beta receptor type-2 (567 aa).

Residues 1-23 (MGRGLLRGLWPLHIVLWTRIAST) form the signal peptide. Residues 24–166 (IPPHVPKSVN…SPDLLLVIIQ (143 aa)) lie on the Extracellular side of the membrane. 6 disulfide bridges follow: Cys51-Cys84, Cys54-Cys71, Cys61-Cys67, Cys77-Cys101, Cys121-Cys136, and Cys138-Cys143. Residues Asn70 and Asn94 are each glycosylated (N-linked (GlcNAc...) asparagine). Residues 167–187 (VTGVSLLPPLGIAIAVIAIFY) form a helical membrane-spanning segment. The Cytoplasmic segment spans residues 188–567 (CYRVHRQQKL…PEDGSLNTTK (380 aa)). One can recognise a Protein kinase domain in the interval 244–546 (IELDTLVGKG…RFSELEHPDR (303 aa)). ATP-binding positions include 250–258 (VGKGRFAEV) and Lys277. Residue Asp379 is the Proton acceptor of the active site. A phosphoserine mark is found at Ser409, Ser548, and Ser553. Residues 546 to 567 (RLSGRSCSQEKIPEDGSLNTTK) form a disordered region.

Belongs to the protein kinase superfamily. TKL Ser/Thr protein kinase family. TGFB receptor subfamily. Homodimer. Heterohexamer; TGFB1, TGFB2 and TGFB3 homodimeric ligands assemble a functional receptor composed of two TGFBR1 and TGFBR2 heterodimers to form a ligand-receptor heterohexamer. The respective affinity of TGFRB1 and TGFRB2 for the ligands may modulate the kinetics of assembly of the receptor and may explain the different biological activities of TGFB1, TGFB2 and TGFB3. Component of a complex composed of TSC22D1 (via N-terminus), TGFBR1 and TGFBR2; the interaction between TSC22D1 and TGFBR1 is inhibited by SMAD7 and promoted by TGFB1. Interacts with DAXX. Interacts with DYNLT4. Interacts with ZFYVE9; ZFYVE9 recruits SMAD2 and SMAD3 to the TGF-beta receptor. Interacts with and is activated by SCUBE3; this interaction does not affect TGFB1-binding to TGFBR2. Interacts with VPS39; this interaction is independent of the receptor kinase activity and of the presence of TGF-beta. Interacts with CLU. Requires Mg(2+) as cofactor. It depends on Mn(2+) as a cofactor. Post-translationally, phosphorylated on a Ser/Thr residue in the cytoplasmic domain.

The protein resides in the cell membrane. The protein localises to the membrane raft. It carries out the reaction L-threonyl-[receptor-protein] + ATP = O-phospho-L-threonyl-[receptor-protein] + ADP + H(+). It catalyses the reaction L-seryl-[receptor-protein] + ATP = O-phospho-L-seryl-[receptor-protein] + ADP + H(+). Transmembrane serine/threonine kinase forming with the TGF-beta type I serine/threonine kinase receptor, TGFBR1, the non-promiscuous receptor for the TGF-beta cytokines TGFB1, TGFB2 and TGFB3. Transduces the TGFB1, TGFB2 and TGFB3 signal from the cell surface to the cytoplasm and is thus regulating a plethora of physiological and pathological processes including cell cycle arrest in epithelial and hematopoietic cells, control of mesenchymal cell proliferation and differentiation, wound healing, extracellular matrix production, immunosuppression and carcinogenesis. The formation of the receptor complex composed of 2 TGFBR1 and 2 TGFBR2 molecules symmetrically bound to the cytokine dimer results in the phosphorylation and the activation of TGFRB1 by the constitutively active TGFBR2. Activated TGFBR1 phosphorylates SMAD2 which dissociates from the receptor and interacts with SMAD4. The SMAD2-SMAD4 complex is subsequently translocated to the nucleus where it modulates the transcription of the TGF-beta-regulated genes. This constitutes the canonical SMAD-dependent TGF-beta signaling cascade. Also involved in non-canonical, SMAD-independent TGF-beta signaling pathways. The sequence is that of TGF-beta receptor type-2 (Tgfbr2) from Rattus norvegicus (Rat).